A 302-amino-acid polypeptide reads, in one-letter code: Putative peptide permease protein BRA0407/BS1330_II0404 (302 aa).

The tract at residues 1–22 (MRSSIHASRLRKMGQSIPASTG) is disordered. 6 helical membrane-spanning segments follow: residues 38–58 (IFGL…PLWL), 101–121 (LLVA…IGAI), 147–167 (IFLL…VVVI), 200–222 (AGLG…VVYA), 230–250 (ILLE…AASW), and 268–288 (WQWL…NFIG). An ABC transmembrane type-1 domain is found at 97–288 (GRISLLVAVS…LAVLAINFIG (192 aa)).

Belongs to the binding-protein-dependent transport system permease family. The complex is composed of two ATP-binding proteins (BRA0404 and BRA0405), two transmembrane proteins (BRA0407 and BRA0408) and a solute-binding protein (BRA0409).

The protein resides in the cell inner membrane. Its function is as follows. Probably part of an ABC transporter complex that could be involved in peptide import. Probably responsible for the translocation of the substrate across the membrane. In Brucella suis biovar 1 (strain 1330), this protein is Putative peptide permease protein BRA0407/BS1330_II0404.